Reading from the N-terminus, the 581-residue chain is Arginine--tRNA ligase (581 aa).

The 'HIGH' region signature appears at 122-132 (PNVAKPMHVGH).

The protein belongs to the class-I aminoacyl-tRNA synthetase family. Monomer.

It localises to the cytoplasm. The catalysed reaction is tRNA(Arg) + L-arginine + ATP = L-arginyl-tRNA(Arg) + AMP + diphosphate. The chain is Arginine--tRNA ligase from Francisella tularensis subsp. tularensis (strain WY96-3418).